Consider the following 591-residue polypeptide: L-fucose isomerase (591 aa).

Residues Glu-337 and Asp-361 each act as proton acceptor in the active site. 3 residues coordinate Mn(2+): Glu-337, Asp-361, and His-528.

It belongs to the L-fucose isomerase family. As to quaternary structure, homohexamer. Mn(2+) is required as a cofactor.

The protein localises to the cytoplasm. It catalyses the reaction L-fucose = L-fuculose. Its pathway is carbohydrate degradation; L-fucose degradation; L-lactaldehyde and glycerone phosphate from L-fucose: step 1/3. Functionally, converts the aldose L-fucose into the corresponding ketose L-fuculose. In Salmonella heidelberg (strain SL476), this protein is L-fucose isomerase.